The chain runs to 907 residues: MPTTKCAVPLVSGAAGGGGSAELTRQLSSTQASPRFSFSSGVLPSLGSRGGGERHARLRRFIVSPYDRRYELWNNYLILLVVYSAWVTPFEFGFVPEPAGALAAADNAVNAFFAVDIVLTFFVAYTDPKTFLLQDDPRKIALRYITTWFVLDVVATIPTELARRILPPDLRSYGFFGILRLWRLHRVGILFARLEKDRKFSYFWVRCVKLVCVTLFAVHCSACFYYLLADRYPDPTNTWISAYMPNFHKASIWSRYVASMYWSITTLSTVGYGDMHAENTGEMVFTTTYMLFNLGLTAYIIGNMTNLVVHGTSRTRKFRDMIQAATSFAQRHQLPARLQEQMVSHLSLKFRTNSEGLHQQETFEALPKAIKSSISHHLFFGLVQNVYLFEGVSNDLIFQLVSEMNAEYFAPREDIILQNEAPADFYIIVSGSMELIELHNGIEQASVLTLAGMAKSGDVVGEIGVLCYRPQLFTARTRSLCQLLRLDRAAFLRIIQSNIADGTIVMNNLIQYLREKKEIASIVAVAKEIDDMLARGQMDFPITLCFAASKGDSFLLHQLLKRGLDPNESDHYGRTALHIAASNGNEQCVRLLLENGADSNSRDPEGRVPLWEALCRRHQTVVQLLVDAGADLSGGDAAPYARVAVEQNDAALLGEIVRHGGDVSGACSGDGTTALHRAVLDGNVQMARLLLEHGADADAEDVNGLTPRAVAEQGGHADMQLAFASATRHEPRKARPPPPASAIVPVPLRDGVDSSPSSSSRRGRTSSTSAASARSTPQRMANFRNSLFGVISSSHAFHHEGGYRGGGGGGGAAAERERSSSSPPLVRVAISCPESRGGKDHSSKLVFMPETLRGLLELGAARFGVSPTRVVTSGGADVDDARLVRDGDHLLLVTDKWVPPENRSRNQ.

Topologically, residues 1–75 (MPTTKCAVPL…YDRRYELWNN (75 aa)) are cytoplasmic. Residues 76–96 (YLILLVVYSAWVTPFEFGFVP) form a helical membrane-spanning segment. Residues 97–102 (EPAGAL) are Extracellular-facing. Residues 103 to 123 (AAADNAVNAFFAVDIVLTFFV) traverse the membrane as a helical segment. The Cytoplasmic segment spans residues 124–146 (AYTDPKTFLLQDDPRKIALRYIT). The helical transmembrane segment at 147–167 (TWFVLDVVATIPTELARRILP) threads the bilayer. Topologically, residues 168-174 (PDLRSYG) are extracellular. The chain crosses the membrane as a helical; Voltage-sensor span at residues 175–195 (FFGILRLWRLHRVGILFARLE). Residues 196-209 (KDRKFSYFWVRCVK) lie on the Cytoplasmic side of the membrane. The chain crosses the membrane as a helical span at residues 210–230 (LVCVTLFAVHCSACFYYLLAD). Residues 231 to 257 (RYPDPTNTWISAYMPNFHKASIWSRYV) are Extracellular-facing. The pore-forming intramembrane region spans 258–277 (ASMYWSITTLSTVGYGDMHA). Residues 278–288 (ENTGEMVFTTT) are Extracellular-facing. The helical transmembrane segment at 289 to 309 (YMLFNLGLTAYIIGNMTNLVV) threads the bilayer. The Cytoplasmic segment spans residues 310-907 (HGTSRTRKFR…VPPENRSRNQ (598 aa)). 388–512 (LFEGVSNDLI…TIVMNNLIQY (125 aa)) serves as a coordination point for a nucleoside 3',5'-cyclic phosphate. 5 ANK repeats span residues 539–568 (DFPITLCFAASKGDSFLLHQLLKRGLDPNE), 572–601 (YGRTALHIAASNGNEQCVRLLLENGADSNS), 605–634 (EGRVPLWEALCRRHQTVVQLLVDAGADLSG), 636–665 (DAAPYARVAVEQNDAALLGEIVRHGGDVSG), and 670–699 (DGTTALHRAVLDGNVQMARLLLEHGADADA). Disordered stretches follow at residues 726–779 (ATRH…TPQR) and 801–824 (GGYRGGGGGGGAAAERERSSSSPP). A compositionally biased stretch (low complexity) spans 754–776 (SSPSSSSRRGRTSSTSAASARST). Residues 803 to 812 (YRGGGGGGGA) are compositionally biased toward gly residues. A KHA domain is found at 827-907 (RVAISCPESR…VPPENRSRNQ (81 aa)).

The protein belongs to the potassium channel family. Plant (TC 1.A.1.4) subfamily.

The protein resides in the membrane. Functionally, probable inward-rectifying potassium channel. Assuming opened or closed conformations in response to the voltage difference across the membrane, the channel is activated by hyperpolarization. The sequence is that of Potassium channel AKT3 from Oryza sativa subsp. japonica (Rice).